The chain runs to 213 residues: Phosphoribosylformylglycinamidine synthase subunit PurQ (213 aa).

Residues 5–213 form the Glutamine amidotransferase type-1 domain; that stretch reads ACVVVYPGSN…FQSILNYLKR (209 aa). The active-site Nucleophile is the Cys86. Catalysis depends on residues His186 and Glu188.

In terms of assembly, part of the FGAM synthase complex composed of 1 PurL, 1 PurQ and 2 PurS subunits.

It localises to the cytoplasm. It catalyses the reaction N(2)-formyl-N(1)-(5-phospho-beta-D-ribosyl)glycinamide + L-glutamine + ATP + H2O = 2-formamido-N(1)-(5-O-phospho-beta-D-ribosyl)acetamidine + L-glutamate + ADP + phosphate + H(+). The catalysed reaction is L-glutamine + H2O = L-glutamate + NH4(+). Its pathway is purine metabolism; IMP biosynthesis via de novo pathway; 5-amino-1-(5-phospho-D-ribosyl)imidazole from N(2)-formyl-N(1)-(5-phospho-D-ribosyl)glycinamide: step 1/2. In terms of biological role, part of the phosphoribosylformylglycinamidine synthase complex involved in the purines biosynthetic pathway. Catalyzes the ATP-dependent conversion of formylglycinamide ribonucleotide (FGAR) and glutamine to yield formylglycinamidine ribonucleotide (FGAM) and glutamate. The FGAM synthase complex is composed of three subunits. PurQ produces an ammonia molecule by converting glutamine to glutamate. PurL transfers the ammonia molecule to FGAR to form FGAM in an ATP-dependent manner. PurS interacts with PurQ and PurL and is thought to assist in the transfer of the ammonia molecule from PurQ to PurL. The polypeptide is Phosphoribosylformylglycinamidine synthase subunit PurQ (Thermotoga maritima (strain ATCC 43589 / DSM 3109 / JCM 10099 / NBRC 100826 / MSB8)).